A 286-amino-acid polypeptide reads, in one-letter code: Flagellin FlaB2 (286 aa).

Belongs to the bacterial flagellin family. In terms of assembly, the flagellum consists of an outer layer composed of repeating units of FlaA around a core that contains several antigenically related polypeptides. Interacts with FliW; a synthetic peptide of FlaB1 (residues 229-247) partially blocks binding of this protein to FliW.

It is found in the periplasmic flagellum. It localises to the periplasm. Its function is as follows. Component of the core of the flagella. The chain is Flagellin FlaB2 from Treponema pallidum (strain Nichols).